We begin with the raw amino-acid sequence, 313 residues long: Pyrimidine-specific ribonucleoside hydrolase RihB (313 aa).

D11 acts as the Proton acceptor in catalysis. D11, D16, and V124 together coordinate Ca(2+). Substrate is bound by residues Q227 and H239. D240 contributes to the Ca(2+) binding site.

The protein belongs to the IUNH family. RihB subfamily. As to quaternary structure, homotetramer. Ca(2+) is required as a cofactor.

It carries out the reaction a pyrimidine ribonucleoside + H2O = a pyrimidine nucleobase + D-ribose. Functionally, hydrolyzes cytidine or uridine to ribose and cytosine or uracil, respectively. Has a clear preference for cytidine over uridine. Strictly specific for ribonucleosides. This is Pyrimidine-specific ribonucleoside hydrolase RihB from Escherichia coli (strain SE11).